Consider the following 369-residue polypeptide: Arsenite methyltransferase (369 aa).

Ser-46 bears the Phosphoserine mark.

The protein belongs to the methyltransferase superfamily. Arsenite methyltransferase family.

Its subcellular location is the cytoplasm. The protein resides in the cytosol. The enzyme catalyses arsenic triglutathione + [thioredoxin]-dithiol + S-adenosyl-L-methionine + 2 H2O = methylarsonous acid + [thioredoxin]-disulfide + 3 glutathione + S-adenosyl-L-homocysteine + H(+). The catalysed reaction is arsenic triglutathione + 2 [thioredoxin]-dithiol + 2 S-adenosyl-L-methionine + H2O = dimethylarsinous acid + 2 [thioredoxin]-disulfide + 3 glutathione + 2 S-adenosyl-L-homocysteine + 2 H(+). It catalyses the reaction arsenic triglutathione + 3 [thioredoxin]-dithiol + 3 S-adenosyl-L-methionine = trimethylarsine + 3 [thioredoxin]-disulfide + 3 glutathione + 3 S-adenosyl-L-homocysteine + 3 H(+). In terms of biological role, catalyzes the transfer of a methyl group from AdoMet to trivalent arsenicals producing methylated and dimethylated arsenicals. It methylates arsenite to form methylarsonate, Me-AsO(3)H(2), which is reduced by methylarsonate reductase to methylarsonite, Me-As(OH)2. Methylarsonite is also a substrate and it is converted into the much less toxic compound dimethylarsinate (cacodylate), Me(2)As(O)-OH. The sequence is that of Arsenite methyltransferase (As3mt) from Rattus norvegicus (Rat).